An 887-amino-acid polypeptide reads, in one-letter code: Microsomal triglyceride transfer protein large subunit (887 aa).

A signal peptide spans Phe-1–Ser-11. One can recognise a Vitellogenin domain in the interval Leu-21 to Ile-655. An intrachain disulfide couples Cys-167 to Cys-187.

Heterodimer; heterodimerizes with the protein disulfide isomerase (P4HB/PDI). Interacts with APOB. Interacts with PRAP1.

It localises to the endoplasmic reticulum. The protein resides in the golgi apparatus. The enzyme catalyses a 1,2-diacyl-sn-glycero-3-phosphocholine(in) = a 1,2-diacyl-sn-glycero-3-phosphocholine(out). The catalysed reaction is a 1,2-diacyl-sn-glycero-3-phosphoethanolamine(in) = a 1,2-diacyl-sn-glycero-3-phosphoethanolamine(out). It carries out the reaction a cholesterol ester(in) = a cholesterol ester(out). It catalyses the reaction a triacyl-sn-glycerol(in) = a triacyl-sn-glycerol(out). In terms of biological role, catalyzes the transport of triglyceride, cholesteryl ester, and phospholipid between phospholipid surfaces. Required for the assembly and secretion of plasma lipoproteins that contain apolipoprotein B. May be involved in regulating cholesteryl ester biosynthesis in cells that produce lipoproteins. This Bos taurus (Bovine) protein is Microsomal triglyceride transfer protein large subunit (MTTP).